Consider the following 157-residue polypeptide: UPF0262 protein Rleg2_0240 (157 aa).

This sequence belongs to the UPF0262 family.

The protein is UPF0262 protein Rleg2_0240 of Rhizobium leguminosarum bv. trifolii (strain WSM2304).